We begin with the raw amino-acid sequence, 508 residues long: MLVSKSIASRAGLASAVASRSCRPSFTAMPLRAKVLGQQAPISTQAAAELFKPVEGDEPEDVLFNSLYNLRSVELNRPAKYNALNGSMIRKIAPRLLEWERSDMANVIVIKGSGEKAFCAGGDVAALAKQNAEGPEGVKKSVDYFGLEYKLNHLISTYTRPYVAFLDGITMGGGVGLSIHAPFRIATERTVFAMPETKIGFFPDVGASFFLPRMPGQVGPYLGLTSALLKGVQVYYAGIATHYLHSSSLPALESRLAELTPRDYWTIEQRLSVINDTIEEFSTGVPYDENIEIGGKIRLAIDRCFKYDKIDEIIAALKEEAAEGAKGGVQSWAKNTLEELTQRSPTSLHVTLRQMRLGKSWGIAHTFKREHQMAAKFMKSHDFNEGVTALLIDKGANGPAKWKPASLDEIPPGANISEDYFRNDPEVPVLELLNDRSYMQYPYNKFGLPNDYDVKEAIEKGNFTREKLIDHFVETRRGKQGVREAVSDVLDRMAVRSKGTEHVQWKKE.

Belongs to the enoyl-CoA hydratase/isomerase family. Mitochondrion-specific ribosomal protein mS47 subfamily. In terms of assembly, component of the mitochondrial small ribosomal subunit (mt-SSU). Mature N.crassa 74S mitochondrial ribosomes consist of a small (37S) and a large (54S) subunit. The 37S small subunit contains a 16S ribosomal RNA (16S mt-rRNA) and 32 different proteins. The 54S large subunit contains a 23S rRNA (23S mt-rRNA) and 42 different proteins. mS47 forms a protuberance of the N.crassa mitoribosome and retains a solvent-exposed cavity liekly capable of accommodating a substrate, in accordance with it being an active enzyme as well as an integral constituent of the mitoribosome.

It localises to the mitochondrion. It catalyses the reaction 3-hydroxy-2-methylpropanoyl-CoA + H2O = 3-hydroxy-2-methylpropanoate + CoA + H(+). Component of the mitochondrial ribosome (mitoribosome), a dedicated translation machinery responsible for the synthesis of mitochondrial genome-encoded proteins, including at least some of the essential transmembrane subunits of the mitochondrial respiratory chain. The mitoribosomes are attached to the mitochondrial inner membrane and translation products are cotranslationally integrated into the membrane. mS47 has enzymatic activity in vitro, and is able to catalyze the specific hydrolysis of 3-hydroxyisobutyryl-CoA (HIBYL-CoA). However, because the turnover rate of mS47 is only a fraction of that of the homologous mammalian enzyme, the physiological function of this activity remains unclear. The chain is Small ribosomal subunit protein mS47 (ehd3) from Neurospora crassa (strain ATCC 24698 / 74-OR23-1A / CBS 708.71 / DSM 1257 / FGSC 987).